Here is a 275-residue protein sequence, read N- to C-terminus: Large ribosomal subunit protein uL2 (275 aa).

A disordered region spans residues 223 to 275 (VAMNPVDHPHGGGEGRTGEGRVPVSPWGTPAKGYRTRNNKRTDNMIVRRRHSK). Basic and acidic residues predominate over residues 229–241 (DHPHGGGEGRTGE).

It belongs to the universal ribosomal protein uL2 family. As to quaternary structure, part of the 50S ribosomal subunit. Forms a bridge to the 30S subunit in the 70S ribosome.

Its function is as follows. One of the primary rRNA binding proteins. Required for association of the 30S and 50S subunits to form the 70S ribosome, for tRNA binding and peptide bond formation. It has been suggested to have peptidyltransferase activity; this is somewhat controversial. Makes several contacts with the 16S rRNA in the 70S ribosome. The protein is Large ribosomal subunit protein uL2 of Laribacter hongkongensis (strain HLHK9).